Here is a 1202-residue protein sequence, read N- to C-terminus: Liprin-alpha-1 (1202 aa).

Residues 1–33 (MMCEVMPTISEAEGPPGGGGGHGSGSPSQPDAD) are disordered. Positions 15 to 24 (PPGGGGGHGS) are enriched in gly residues. The stretch at 34-141 (SHFEQLMVSM…VSRHERSLRM (108 aa)) forms a coiled coil. At serine 150 the chain carries Phosphoserine. Residues 176 to 214 (EKVRERLRVALERCSLLEEELGATHKELMILKEQNNQKK) are a coiled coil. Disordered regions lie at residues 224-245 (NHEQ…SLSH) and 426-446 (KNQE…HNKR). Phosphothreonine is present on threonine 230. Phosphoserine occurs at positions 239, 242, and 244. 2 coiled-coil regions span residues 249–521 (LAKV…GASL) and 623–669 (ADAH…SGSL). Serine 448 carries the post-translational modification Phosphoserine. Positions 651–662 (ENTEQRAEEIES) are enriched in basic and acidic residues. Residues 651–855 (ENTEQRAEEI…SKLGGQAEKN (205 aa)) form a disordered region. A phosphoserine mark is found at serine 666, serine 668, and serine 693. Positions 686-700 (ASSLASSSPPGSGRS) are enriched in low complexity. Residues 725–736 (SREEVRDDKTTI) are compositionally biased toward basic and acidic residues. Threonine 761 carries the post-translational modification Phosphothreonine. The span at 762–771 (VSHEDIRDIR) shows a compositional bias: basic and acidic residues. Residue serine 763 is modified to Phosphoserine. Residues 832-841 (VSETDNSSQD) are compositionally biased toward polar residues. Residues 847 to 871 (KLGGQAEKNRKLQKKHELLEEARRQ) adopt a coiled-coil conformation. SAM domains follow at residues 878-944 (WDGP…IMSL), 963-1027 (NHEW…LRRL), and 1051-1120 (WSND…LLVM). Residues 1021-1050 (IMCLRRLNYDRKELERKREESQSEIKDVLV) are a coiled coil. The residue at position 1133 (serine 1133) is a Phosphoserine. Phosphothreonine is present on threonine 1159. The tract at residues 1163-1202 (NFRVTSSMSSPSMQPKKMQMDGNVSGTQRLDSATVRTYSC) is disordered. The segment covering 1168–1179 (SSMSSPSMQPKK) has biased composition (low complexity). Residues 1184-1202 (GNVSGTQRLDSATVRTYSC) show a composition bias toward polar residues.

Belongs to the liprin family. Liprin-alpha subfamily. As to quaternary structure, homodimer. Interacts with PTPRF (via D2 domain). Part of a cortical microtubule stabilization complex (CMSC) composed of KANK1, PPFIA1, PPFIBP1, ERC1/ELKS, PHLDB2/LL5beta, CLASPs, KIF21A and possibly additional interactors; within CMSCs KANK1 and PHLDB2/LL5beta seem to be the core components for recruiting microtubule-binding proteins KIF21A and CLASPs, whereas PPFIA1, PPFIBP1 and ERC1/ELKS serve as scaffolds for protein clustering. As to expression, ubiquitous.

The protein resides in the cytoplasm. It is found in the cell cortex. In terms of biological role, may regulate the disassembly of focal adhesions. May localize receptor-like tyrosine phosphatases type 2A at specific sites on the plasma membrane, possibly regulating their interaction with the extracellular environment and their association with substrates. This Homo sapiens (Human) protein is Liprin-alpha-1 (PPFIA1).